A 156-amino-acid chain; its full sequence is Putative NrdI-like protein (156 aa).

The protein belongs to the NrdI family.

This chain is Putative NrdI-like protein, found in Streptococcus pneumoniae serotype 4 (strain ATCC BAA-334 / TIGR4).